A 560-amino-acid chain; its full sequence is Digoxin reductase (560 aa).

Residues 1 to 48 (MEYGKCRGIERGMGRRDFLKAATLLGATAAGAGMLAGCAPKSASEAQA) constitute a signal peptide (tat-type signal).

Belongs to the FAD-dependent oxidoreductase 2 family. As to quaternary structure, may form a membrane-associated complex with Cgr1. The cofactor is FAD. [4Fe-4S] cluster is required as a cofactor. In terms of processing, predicted to be exported by the Tat system. The position of the signal peptide cleavage has not been experimentally proven.

It is found in the cell membrane. The catalysed reaction is digoxin + 2 Fe(II)-[cytochrome c] + 3 H(+) = dihydrodigoxin + 2 Fe(III)-[cytochrome c]. It carries out the reaction digitoxin + 2 Fe(II)-[cytochrome c] + 3 H(+) = dihydrodigitoxin + 2 Fe(III)-[cytochrome c]. The enzyme catalyses digoxigenin + 2 Fe(II)-[cytochrome c] + 3 H(+) = dihydrodigoxigenin + 2 Fe(III)-[cytochrome c]. It catalyses the reaction ouabain + 2 Fe(II)-[cytochrome c] + 3 H(+) = dihydroouabain + 2 Fe(III)-[cytochrome c]. The catalysed reaction is ouabagenin + 2 Fe(II)-[cytochrome c] + 3 H(+) = dihydroouabagenin + 2 Fe(III)-[cytochrome c]. In terms of biological role, involved in the inactivation of the cardiac medication and plant natural product digoxin, thus decreasing drug efficacy and toxicity. Catalyzes the reduction of the alpha,beta-unsaturated butyrolactone ring of digoxin to the inactive metabolite dihydrodigoxin. Likely uses the cytochrome Cgr1 as the physiological electron donor, encoded by the adjacent gene in the locus. Only reduces digoxin and other cardenolide toxins, such as digitoxin, digoxigenin, ouabain and ouabagenin. Therefore is a specialized enzyme present in some gut bacteria E.lenta that protects their human host against ingested plant toxins. This Eggerthella lenta (strain ATCC 25559 / DSM 2243 / CCUG 17323 / JCM 9979 / KCTC 3265 / NCTC 11813 / VPI 0255 / 1899 B) (Eubacterium lentum) protein is Digoxin reductase.